The primary structure comprises 205 residues: Nuclear transcription factor Y subunit beta (205 aa).

Positions 1 to 50 (MDGDSSTTDASQLGIAGDYIGGSHYVIQPHDDTEDSMNDHEDTNGSKESF) are a domain. Residues 24–50 (HYVIQPHDDTEDSMNDHEDTNGSKESF) form a disordered region. Over residues 37–50 (MNDHEDTNGSKESF) the composition is skewed to basic and acidic residues. Residues 51-140 (REQDIYLPIA…PLKLYLQKFR (90 aa)) form a b domain region. A DNA-binding region spans residues 57-63 (LPIANVA). Residues 84–95 (VQECVSEFISFI) form a subunit association domain (SAD) region. Residues 141–201 (EAMKGEKGIG…SYQQISGVQQ (61 aa)) are c domain.

It belongs to the NFYB/HAP3 subunit family. Heterotrimeric transcription factor composed of three components, NF-YA, NF-YB and NF-YC. NF-YB and NF-YC must interact and dimerize for NF-YA association and DNA binding.

It is found in the nucleus. Functionally, component of the sequence-specific heterotrimeric transcription factor (NF-Y) which specifically recognizes a 5'-CCAAT-3' box motif found in the promoters of its target genes. NF-Y can function as both an activator and a repressor, depending on its interacting cofactors. The polypeptide is Nuclear transcription factor Y subunit beta (NFYB) (Gallus gallus (Chicken)).